The chain runs to 346 residues: tRNA N6-adenosine threonylcarbamoyltransferase (346 aa).

Fe cation-binding residues include His111 and His115. Residues 134–138 (LVSGG), Asp167, Gly180, Asp184, and Asn279 each bind substrate. Asp307 lines the Fe cation pocket.

It belongs to the KAE1 / TsaD family. Fe(2+) serves as cofactor.

Its subcellular location is the cytoplasm. The enzyme catalyses L-threonylcarbamoyladenylate + adenosine(37) in tRNA = N(6)-L-threonylcarbamoyladenosine(37) in tRNA + AMP + H(+). Functionally, required for the formation of a threonylcarbamoyl group on adenosine at position 37 (t(6)A37) in tRNAs that read codons beginning with adenine. Is involved in the transfer of the threonylcarbamoyl moiety of threonylcarbamoyl-AMP (TC-AMP) to the N6 group of A37, together with TsaE and TsaB. TsaD likely plays a direct catalytic role in this reaction. The chain is tRNA N6-adenosine threonylcarbamoyltransferase from Nostoc sp. (strain PCC 7120 / SAG 25.82 / UTEX 2576).